The following is a 245-amino-acid chain: Uridylate kinase (245 aa).

16 to 19 serves as a coordination point for ATP; it reads KLSG. Residues 24-29 are involved in allosteric activation by GTP; that stretch reads GDNGFG. Glycine 59 is a UMP binding site. ATP contacts are provided by glycine 60 and arginine 64. Residues aspartate 78 and 139 to 146 each bind UMP; that span reads NGAPFFTT. ATP is bound by residues asparagine 167, tyrosine 173, and aspartate 176.

Belongs to the UMP kinase family. As to quaternary structure, homohexamer.

The protein resides in the cytoplasm. The enzyme catalyses UMP + ATP = UDP + ADP. Its pathway is pyrimidine metabolism; CTP biosynthesis via de novo pathway; UDP from UMP (UMPK route): step 1/1. Allosterically activated by GTP. Inhibited by UTP. In terms of biological role, catalyzes the reversible phosphorylation of UMP to UDP. The protein is Uridylate kinase of Deinococcus radiodurans (strain ATCC 13939 / DSM 20539 / JCM 16871 / CCUG 27074 / LMG 4051 / NBRC 15346 / NCIMB 9279 / VKM B-1422 / R1).